A 351-amino-acid polypeptide reads, in one-letter code: LETM1 domain-containing protein 1 (351 aa).

Residues M1–P130 are Cytoplasmic-facing. A helical membrane pass occupies residues V131–F151. The Mitochondrial intermembrane portion of the chain corresponds to P152–Q351. Residues I172–Q351 enclose the Letm1 RBD domain.

The protein localises to the mitochondrion outer membrane. The protein resides in the nucleus. It localises to the mitochondrion inner membrane. In terms of biological role, may play an essential role for mitochondrial structure and function. This is LETM1 domain-containing protein 1 from Xenopus tropicalis (Western clawed frog).